The following is a 417-amino-acid chain: Tol-Pal system protein TolB (417 aa).

The signal sequence occupies residues 1-16 (MKYLWLFLIYAIGLFA).

The protein belongs to the TolB family. As to quaternary structure, the Tol-Pal system is composed of five core proteins: the inner membrane proteins TolA, TolQ and TolR, the periplasmic protein TolB and the outer membrane protein Pal. They form a network linking the inner and outer membranes and the peptidoglycan layer.

The protein localises to the periplasm. Functionally, part of the Tol-Pal system, which plays a role in outer membrane invagination during cell division and is important for maintaining outer membrane integrity. This chain is Tol-Pal system protein TolB, found in Helicobacter pylori (strain J99 / ATCC 700824) (Campylobacter pylori J99).